A 445-amino-acid chain; its full sequence is MREILHIQGGQCGNQIGAKFWEVICDEHGIDHTGKYAGDSDLQLERINVYYNEASGGRFVPRAVLMDLEPGTMDSVRSGPFGQIFRPDNFVFGQSGAGNNWAKGHYTEGAELIDSVLDVVRKEAENCDCLQGFQVCHSLGGGTGSGMGTLLISKIREEYPDRMMLTFSVFPSPKVSDTVVEPYNATLSVHQLVENADECMVLDNEALYDICFRTLKLATPTFGDLNHLISATMSGVTCCLRFPGQLNSDLRKLAVNLIPFPRLHFFMVGFAPLTSRGSQQYRALTVPELTQQMWDSKNMMCAADPRHGRYLTASAMFRGKMSTKEVDEQMLNVQNKNSSYFVEWIPNNVKSSVCDIPPNGLKMASTFIGNSTSIQEMFRRVSEQFTAMFRRKAFLHWYTGEGMDEMEFTEAESNMNDLVAEYQQYQDATAEDEEEYEDEEEEMAA.

GTP-binding residues include Q11, E69, S138, G142, T143, G144, N204, and N226. Position 69 (E69) interacts with Mg(2+). The interval 426–445 (QDATAEDEEEYEDEEEEMAA) is disordered. The segment covering 429-445 (TAEDEEEYEDEEEEMAA) has biased composition (acidic residues).

It belongs to the tubulin family. Dimer of alpha and beta chains. A typical microtubule is a hollow water-filled tube with an outer diameter of 25 nm and an inner diameter of 15 nM. Alpha-beta heterodimers associate head-to-tail to form protofilaments running lengthwise along the microtubule wall with the beta-tubulin subunit facing the microtubule plus end conferring a structural polarity. Microtubules usually have 13 protofilaments but different protofilament numbers can be found in some organisms and specialized cells. Mg(2+) is required as a cofactor.

The protein resides in the cytoplasm. It is found in the cytoskeleton. Tubulin is the major constituent of microtubules, a cylinder consisting of laterally associated linear protofilaments composed of alpha- and beta-tubulin heterodimers. Microtubules grow by the addition of GTP-tubulin dimers to the microtubule end, where a stabilizing cap forms. Below the cap, tubulin dimers are in GDP-bound state, owing to GTPase activity of alpha-tubulin. The sequence is that of Tubulin beta-1 chain (TUBB1) from Eleusine indica (Goosegrass).